A 199-amino-acid chain; its full sequence is Transgelin-2 (199 aa).

Ala-2 bears the N-acetylalanine mark. Ser-11 carries the post-translational modification Phosphoserine. N6-acetyllysine occurs at positions 17 and 20. The 113-residue stretch at 24 to 136 folds into the Calponin-homology (CH) domain; the sequence is ADLEQILIQW…RTLMNLGGLA (113 aa). Ser-163 bears the Phosphoserine mark. Residue Lys-171 forms a Glycyl lysine isopeptide (Lys-Gly) (interchain with G-Cter in SUMO2) linkage. Residues 174–199 form a Calponin-like repeat; that stretch reads IGLQMGTNRGASQAGMTGYGMPRQIL. Position 180 is a phosphothreonine (Thr-180). 2 positions are modified to omega-N-methylarginine: Arg-182 and Arg-196.

This sequence belongs to the calponin family.

The polypeptide is Transgelin-2 (Tagln2) (Mus musculus (Mouse)).